A 587-amino-acid polypeptide reads, in one-letter code: ASI1-immunoprecipitated protein 3 (587 aa).

Residues 1 to 118 are disordered; the sequence is MVLSRRFAQV…NVTGKGKGKR (118 aa). Positions 66–98 are enriched in acidic residues; sequence EDEDMAEGDDDQAEEETNPEAEEEEDEEEEEKP. The BAH domain occupies 129 to 248; that stretch reads NTYDLEVPVL…TVEKKLWKLT (120 aa). A TFIIS central domain is found at 344 to 493; sequence HRDKCLGKLL…RMQMTSVRCS (150 aa). 2 disordered regions span residues 371–396 and 539–587; these read EAKV…GKDE and TDKP…KKPE. The span at 560–570 shows a compositional bias: basic and acidic residues; sequence ETNKPKDEALK. The span at 571-581 shows a compositional bias: polar residues; it reads TNDSNADNNPE.

As to quaternary structure, interacts with MOM1. Component of the ASI1-AIPP1-EDM2 (AAE) RNA regulatory complex composed of at least AIPP1/EDM3, ASI1 and EDM2 and may contain CPL2, AIPP2 and AIPP3/BDT1. Part of the BAH-PHD bivalent histone reader complex that contains AIPP2, PAIPP2 and AIPP3/BDT1; the BAH-PHD module associates with CPL2 to form the BAH-PHD-CPL2 complex (BPC) for transcriptional repression. Binds directly to CPL2, PHD1, PAIPP2/PHD2, AIPP2/PHD3, PHD4, PHD5 and PHD6. As to expression, expressed ubiquitously.

It is found in the nucleus. Its function is as follows. Transcriptional repressor. Together with PHD finger-containing proteins (e.g. PHD1, PAIPP2/PHD2, AIPP2/PHD3, PHD4, PHD5 and PHD6), cooperates to form a BAH-PHD bivalent histone reader complex able to read histone H3 lysine 27 trimethylation (H3K27me3) and low-methylated H3K4 histone marks in order to regulate transcription, especially to prevent early flowering; H3K27me3 reader of this complex. CPL2 is subsequently recruited to form a BAH-PHD-CPL2 complex (BPC) in order to silence several H3K27me3 and low-methylated H3K4 enriched loci, including AGO5, via the phosphorylation state-dependent inhibition of Pol II release from the transcriptional start site (e.g. Ser5P-Pol II dephosphorylation). The BPC complex represses flowering by inhibiting the expression of several genes, including AGL6, FT, FUL and SOC1. Prevents the accumulation of intronic heterochromatin-containing genes (e.g. IBM1, At3g05410 and RPP7). Seems to not be involved in vernalization establishment, by contrast to orthologs in grass plants. The chain is ASI1-immunoprecipitated protein 3 from Arabidopsis thaliana (Mouse-ear cress).